The sequence spans 327 residues: Zinc transport protein ZntB (327 aa).

At 1–273 the chain is on the cytoplasmic side; the sequence is MEAIKGSDVN…ARRTYTMSLM (273 aa). Residues 274–294 traverse the membrane as a helical segment; sequence AMVFLPSTFLTGLFGVNLGGI. Over 295–300 the chain is Periplasmic; that stretch reads PGGGWR. Residues 301–321 traverse the membrane as a helical segment; the sequence is FGFSLFCILLVVLIGGVTLWL. The Cytoplasmic segment spans residues 322–327; it reads HRSKWL.

The protein belongs to the CorA metal ion transporter (MIT) (TC 1.A.35) family.

Its subcellular location is the cell inner membrane. It carries out the reaction Zn(2+)(out) + H(+)(out) = Zn(2+)(in) + H(+)(in). In terms of biological role, zinc transporter. Acts as a Zn(2+):proton symporter, which likely mediates zinc ion uptake. This is Zinc transport protein ZntB from Salmonella agona (strain SL483).